Reading from the N-terminus, the 414-residue chain is 5-aminolevulinate synthase (414 aa).

Residues Arg22, Ser133, and Lys152 each coordinate substrate. 3 residues coordinate pyridoxal 5'-phosphate: Ser185, His213, and Thr241. Lys244 is a catalytic residue. At Lys244 the chain carries N6-(pyridoxal phosphate)lysine. Pyridoxal 5'-phosphate-binding residues include Thr273 and Thr274. Thr359 provides a ligand contact to substrate.

It belongs to the class-II pyridoxal-phosphate-dependent aminotransferase family. Homodimer. It depends on pyridoxal 5'-phosphate as a cofactor.

The enzyme catalyses succinyl-CoA + glycine + H(+) = 5-aminolevulinate + CO2 + CoA. It participates in porphyrin-containing compound metabolism; protoporphyrin-IX biosynthesis; 5-aminolevulinate from glycine: step 1/1. The chain is 5-aminolevulinate synthase (hemA) from Rickettsia conorii (strain ATCC VR-613 / Malish 7).